A 497-amino-acid polypeptide reads, in one-letter code: Glycerol kinase (497 aa).

Threonine 12 is a binding site for ADP. Residues threonine 12, threonine 13, and serine 14 each contribute to the ATP site. Threonine 12 serves as a coordination point for sn-glycerol 3-phosphate. Arginine 16 contributes to the ADP binding site. Sn-glycerol 3-phosphate contacts are provided by arginine 82, glutamate 83, tyrosine 134, and aspartate 243. Glycerol-binding residues include arginine 82, glutamate 83, tyrosine 134, aspartate 243, and glutamine 244. ADP-binding residues include threonine 265 and glycine 308. Residues threonine 265, glycine 308, glutamine 312, and glycine 409 each contribute to the ATP site. Residues glycine 409 and asparagine 413 each contribute to the ADP site.

The protein belongs to the FGGY kinase family. Homotetramer and homodimer (in equilibrium).

The catalysed reaction is glycerol + ATP = sn-glycerol 3-phosphate + ADP + H(+). The protein operates within polyol metabolism; glycerol degradation via glycerol kinase pathway; sn-glycerol 3-phosphate from glycerol: step 1/1. Activated by phosphorylation and inhibited by fructose 1,6-bisphosphate (FBP). Its function is as follows. Key enzyme in the regulation of glycerol uptake and metabolism. Catalyzes the phosphorylation of glycerol to yield sn-glycerol 3-phosphate. This chain is Glycerol kinase, found in Thermoanaerobacter sp. (strain X514).